The following is a 697-amino-acid chain: PHD finger protein At2g01810 (697 aa).

Disordered stretches follow at residues 319 to 362 and 457 to 478; these read DENS…QYYS and EQKRKKKRKVKPQETSECTSTT. Residues 339–349 are compositionally biased toward basic and acidic residues; the sequence is SGRDTVLDDHN. The PHD-type zinc-finger motif lies at 635–685; that stretch reads TVDCKCGARDDDGERMVACDACKVWHHTLCNSIEDDEAVPSVFLCNMCYGD.

Its subcellular location is the nucleus. The chain is PHD finger protein At2g01810 from Arabidopsis thaliana (Mouse-ear cress).